A 305-amino-acid polypeptide reads, in one-letter code: Ornithine carbamoyltransferase (305 aa).

Residues 53-56 (STRT), Q80, R104, and 131-134 (HPCQ) contribute to the carbamoyl phosphate site. L-ornithine contacts are provided by residues N162, D219, and 223–224 (SM). Residues 259–260 (CL) and R287 each bind carbamoyl phosphate.

This sequence belongs to the aspartate/ornithine carbamoyltransferase superfamily. OTCase family.

It is found in the cytoplasm. The catalysed reaction is carbamoyl phosphate + L-ornithine = L-citrulline + phosphate + H(+). Its pathway is amino-acid biosynthesis; L-arginine biosynthesis; L-arginine from L-ornithine and carbamoyl phosphate: step 1/3. Reversibly catalyzes the transfer of the carbamoyl group from carbamoyl phosphate (CP) to the N(epsilon) atom of ornithine (ORN) to produce L-citrulline. The protein is Ornithine carbamoyltransferase of Psychrobacter cryohalolentis (strain ATCC BAA-1226 / DSM 17306 / VKM B-2378 / K5).